Here is a 519-residue protein sequence, read N- to C-terminus: Fatty acid--[acyl-carrier-protein] ligase ScoC (519 aa).

Mg(2+) is bound at residue Thr167. The ATP site is built by Ile216 and Thr312. Glu313 lines the Mg(2+) pocket. Asp394 and Lys411 together coordinate ATP.

This sequence belongs to the ATP-dependent AMP-binding enzyme family. Mg(2+) is required as a cofactor.

It carries out the reaction a medium-chain fatty acid + holo-[ACP] + ATP = a medium-chain fatty acyl-[ACP] + AMP + diphosphate. It catalyses the reaction a medium-chain fatty acid + ATP + H(+) = a medium-chain fatty acyl-AMP + diphosphate. The enzyme catalyses a medium-chain fatty acyl-AMP + holo-[ACP] = a medium-chain fatty acyl-[ACP] + AMP + H(+). The catalysed reaction is octanoate + holo-[ACP] + ATP = octanoyl-[ACP] + AMP + diphosphate. It carries out the reaction octanoate + ATP + H(+) = octanoyl-AMP + diphosphate. It catalyses the reaction octanoyl-AMP + holo-[ACP] = octanoyl-[ACP] + AMP + H(+). The enzyme catalyses a (2E)-enoyl fatty acid + holo-[ACP] + ATP = a (2E)-enoyl-[ACP] + AMP + diphosphate. The catalysed reaction is a (2E)-enoyl fatty acid + ATP + H(+) = a (2E)-2-fatty-enoyl-AMP + diphosphate. It carries out the reaction a (2E)-2-fatty-enoyl-AMP + holo-[ACP] = a (2E)-enoyl-[ACP] + AMP + H(+). It catalyses the reaction (2E)-2-butenoate + holo-[ACP] + ATP = (2E)-butenoyl-[ACP] + AMP + diphosphate. The enzyme catalyses (2E)-2-butenoate + ATP + H(+) = (2E)-but-2-enoyl-AMP + diphosphate. The catalysed reaction is (2E)-but-2-enoyl-AMP + holo-[ACP] = (2E)-butenoyl-[ACP] + AMP + H(+). It carries out the reaction a (3R)-3-isocyanyl-fatty acid + holo-[ACP] + ATP = a (3R)-3-isocyanyl-fatty acyl-[ACP] + AMP + diphosphate. It catalyses the reaction a (3R)-3-isocyanyl-fatty acid + ATP + H(+) = a (3R)-3-isocyanyl-fatty acyl-AMP + diphosphate. The enzyme catalyses a (3R)-3-isocyanyl-fatty acyl-AMP + holo-[ACP] = a (3R)-3-isocyanyl-fatty acyl-[ACP] + AMP + H(+). The catalysed reaction is (3R)-3-isocyanylbutanoate + holo-[ACP] + ATP = (3R)-3-isocyanylbutanoyl-[ACP] + AMP + diphosphate. It carries out the reaction (3R)-3-isocyanylbutanoate + ATP + H(+) = (3R)-3-isocyanylbutanoyl-AMP + diphosphate. It catalyses the reaction (3R)-3-isocyanylbutanoyl-AMP + holo-[ACP] = (3R)-3-isocyanylbutanoyl-[ACP] + AMP + H(+). Functionally, acyl:acyl-carrier protein ligase involved in the biosynthesis of a unique class of isonitrile lipopeptides (INLPs). Shows a strong preference for fatty acids with a short/medium-chain length (C4-C8) in vitro, and accepts alpha,beta-unsaturated fatty acids such as crotonate, which seems to be a physiological substrate. Acts twice during the INLP pathway, catalyzing the activation of crotonate ((2E)-2-butenoate) as well as (3R)-3-isocyanylbutanoate as acyl-adenylates (acyl-AMP), and then the acyl transfer to the dedicated acyl-carrier protein ScoB. This Streptomyces coeruleorubidus protein is Fatty acid--[acyl-carrier-protein] ligase ScoC.